A 776-amino-acid chain; its full sequence is Endonuclease MutS2 (776 aa).

330–337 provides a ligand contact to ATP; sequence GPNTGGKT. The 76-residue stretch at 701 to 776 folds into the Smr domain; the sequence is LDLRGMRYEE…GSGATIAILK (76 aa).

The protein belongs to the DNA mismatch repair MutS family. MutS2 subfamily. As to quaternary structure, homodimer. Binds to stalled ribosomes, contacting rRNA.

In terms of biological role, endonuclease that is involved in the suppression of homologous recombination and thus may have a key role in the control of bacterial genetic diversity. Acts as a ribosome collision sensor, splitting the ribosome into its 2 subunits. Detects stalled/collided 70S ribosomes which it binds and splits by an ATP-hydrolysis driven conformational change. Acts upstream of the ribosome quality control system (RQC), a ribosome-associated complex that mediates the extraction of incompletely synthesized nascent chains from stalled ribosomes and their subsequent degradation. Probably generates substrates for RQC. This Lactococcus lactis subsp. lactis (strain IL1403) (Streptococcus lactis) protein is Endonuclease MutS2.